Consider the following 510-residue polypeptide: Peroxidase 2 (510 aa).

The first 19 residues, 1 to 19 (MRLTYLPLFAGIAIQSASA), serve as a signal peptide directing secretion. Positions 20-58 (LPDFFKSSVLKPRRTNSLLINPDAQPDLPTAQQASTAAA) are excised as a propeptide. Residue D228 is the Proton acceptor of the active site. H362 contacts heme.

Homodimer. Requires heme b as cofactor.

Functionally, peroxidase capable of degrading beta-carotene. In Mycetinis scorodonius (Garlic mushroom), this protein is Peroxidase 2.